A 471-amino-acid polypeptide reads, in one-letter code: 3-isopropylmalate dehydratase large subunit (471 aa).

Residues Cys-346, Cys-406, and Cys-409 each coordinate [4Fe-4S] cluster.

It belongs to the aconitase/IPM isomerase family. LeuC type 1 subfamily. In terms of assembly, heterodimer of LeuC and LeuD. The cofactor is [4Fe-4S] cluster.

It carries out the reaction (2R,3S)-3-isopropylmalate = (2S)-2-isopropylmalate. It participates in amino-acid biosynthesis; L-leucine biosynthesis; L-leucine from 3-methyl-2-oxobutanoate: step 2/4. Functionally, catalyzes the isomerization between 2-isopropylmalate and 3-isopropylmalate, via the formation of 2-isopropylmaleate. The polypeptide is 3-isopropylmalate dehydratase large subunit (Bacillus pumilus (strain SAFR-032)).